The primary structure comprises 336 residues: MGNVLAASSPAPPAAGSPPAPGLVSVPPGFTMPPVAGLTPTPDKKETQEDRLPNPGTFEECHRKCKELFPIQMEGVKLTVNKGLSNYFQVNHTVSLSMIGESNYHFGATYVGTKQLGPAEAFPVLVGDLDNSGSLNAQIIHQVTSNVRSKIALQTQQSKFVNWQLDTEYRGEDFTAAVTLGNPDILVGSGILVAHYLQSITPSLALGGELVYHRRPGEEGTVMSLAGRYTAPNWTATLTLGQAGAHATYYHKANDQLQVGVEFEASTRMQDTSVSFGYQLDLPKANLLFKGSVDSNWIVGATLEKKLPPLPLTLAMGAFLNHKKNKFQCGFGLTIG.

Positions 1–58 are disordered; the sequence is MGNVLAASSPAPPAAGSPPAPGLVSVPPGFTMPPVAGLTPTPDKKETQEDRLPNPGTF. Residues 10-21 are compositionally biased toward pro residues; it reads PAPPAAGSPPAP. The segment covering 42 to 52 has biased composition (basic and acidic residues); sequence PDKKETQEDRL.

The protein belongs to the Tom40 family. Forms part of the preprotein translocase complex of the outer mitochondrial membrane (TOM complex). Interacts with mitochondrial targeting sequences.

Its subcellular location is the mitochondrion outer membrane. Its function is as follows. Channel-forming protein essential for import of protein precursors into mitochondria. The sequence is that of Mitochondrial import receptor subunit TOM40 homolog (tomm40) from Xenopus tropicalis (Western clawed frog).